Reading from the N-terminus, the 1481-residue chain is MQRSPLEKASVVSKLFFSWTRPILRKGYRQRLELSDIYQIPSADSADNLSEKLEREWDRELASKKNPKLINALRRCFFWRFMFYGILLYLGEVTKAVQPLLLGRIIASYDPDNKEERSIAIYLGIGLCLLFIVRTLLLHPAIFGLHHIGMQMRIAMFSLIYKKTLKLSSRVLDKISIGQLVSLLSNNLNKFDEGLALAHFVWIVPLQVALLMGLIWELLQASAFCGLGFLIVLALFQAGLGRMMMKYRDQRAGKINERLVITSEMIENIQSVKAYCWEEAMEKMIENLRQTELKLTRKAAYVRYFNSSAFFFSGFFVVFLSVLPYALIKGIVLRKIFTTISFCIVLRMAVTRQFPWAVQTWYDSLGAINKIQDFLQKQEYKTLEYNLTTTEVVMENVTAFWEEGFGELFEKAKQNNSNRKTSNDDDSLFFSNFSLLGTPVLKDINFKIERGQLLAVAGSTGAGKTSLLMMIMGELEPSEGKIKHSGRISFCSQFSWIMPGTIKENIIFGVSYDEYRYRSVINACQLEEDISKFAEKDNIVLGEGGITLSGGQRARISLARAVYKDADLYLLDSPFGYLDVLTEKEIFESCVCKLMANKTRILVTSKMEHLKKADKILILHEGSSYFYGTFSELQNLRPDFSSKLMGYDSFDQFSAERRNSILTETLRRFSLEGDAPVSWTETKKQSFKQTGEFGEKRKNSILNPINSIRKFSIVQKTPLQMNGIEEDSDEPLERRLSLVPDSEQGEVILPRISVISTGPTLQARRRQSVLNLMTHSVNQGQSIHRKTAASTRKVSLAPQANLTELDIYSRRLSQETGLEISEEINEEDLKECFFDDMESIPAVTTWNTYLRYITVHKSLIFVLIWCLVIFLAEVAASLVVLWFLGNTPPQDKGNSTYSRNNSYAVIITRTSSYYVFYIYVGVADTLLAMGFFRGLPLVHTLITVSKILHHKMLHSVLQAPMSTLNTLKAGGILNRFSKDIAILDDLLPLTIFDFIQLLLIVIGAIAVVAVLQPYIFVATVPVIVAFIMLRAYFLQTSQQLKQLESEGRSPIFTHLVTSLKGLWTLRAFGRQPYFETLFHKALNLHTANWFLYLSTLRWFQMRIEMIFVIFFIAVTFISILTTGEGEGTVGIILTLAMNIMSTLQWAVNSSIDVDSLMRSVSRVFKFIDMPTEEGKPTRSTKPYKNGQLSKVMVIENSHVKKDDIWPSGGQMTVKDLTAKYTEGGNPILENISFSISPGQRVGLLGRTGSGKSTLLSAFLRLLNTEGEIQIDGVSWDSITLQQWRKAFGVIPQKVFIFSGTFRKNLDPYEQWSDQEIWKVADEVGLRSVIEQFPGKLDFVLVDGGCVLSHGHKQLMCLARSVLSKAKILLLDEPSAHLDPVTYQIIRRTLKQAFADCTVILCEHRIEAMLECQQFLVIEENKVRQYDSIQKLLNERSLFRQAISPSDRVKLFPHRNSSKCKTQPQIAALKEETEEEVQDTRL.

At 1–77 (MQRSPLEKAS…KLINALRRCF (77 aa)) the chain is on the cytoplasmic side. Residues 78–98 (FWRFMFYGILLYLGEVTKAVQ) form a helical membrane-spanning segment. One can recognise an ABC transmembrane type-1 1 domain in the interval 81 to 365 (FMFYGILLYL…WAVQTWYDSL (285 aa)). The Extracellular portion of the chain corresponds to 99–122 (PLLLGRIIASYDPDNKEERSIAIY). A helical membrane pass occupies residues 123 to 146 (LGIGLCLLFIVRTLLLHPAIFGLH). Residues 147-195 (HIGMQMRIAMFSLIYKKTLKLSSRVLDKISIGQLVSLLSNNLNKFDEGL) are Cytoplasmic-facing. The chain crosses the membrane as a helical span at residues 196-216 (ALAHFVWIVPLQVALLMGLIW). Over 217–222 (ELLQAS) the chain is Extracellular. The helical transmembrane segment at 223-243 (AFCGLGFLIVLALFQAGLGRM) threads the bilayer. At 244–298 (MMKYRDQRAGKINERLVITSEMIENIQSVKAYCWEEAMEKMIENLRQTELKLTRK) the chain is on the cytoplasmic side. A helical membrane pass occupies residues 299-319 (AAYVRYFNSSAFFFSGFFVVF). The Extracellular segment spans residues 320-339 (LSVLPYALIKGIVLRKIFTT). Residues 340–358 (ISFCIVLRMAVTRQFPWAV) form a helical membrane-spanning segment. Residues 359 to 858 (QTWYDSLGAI…YLRYITVHKS (500 aa)) lie on the Cytoplasmic side of the membrane. ATP contacts are provided by residues tryptophan 401, serine 434, 458 to 465 (GSTGAGKT), and glutamine 493. The 224-residue stretch at 423–646 (NDDDSLFFSN…RPDFSSKLMG (224 aa)) folds into the ABC transporter 1 domain. Cysteine 524 is lipidated: S-palmitoyl cysteine. 2 positions are modified to phosphoserine: serine 549 and serine 660. Positions 654-831 (SAERRNSILT…EEINEEDLKE (178 aa)) are disordered R region. At serine 670 the chain carries Phosphoserine; by PKA. Serine 686 carries the phosphoserine modification. Residue lysine 688 forms a Glycyl lysine isopeptide (Lys-Gly) (interchain with G-Cter in ubiquitin) linkage. 2 positions are modified to phosphoserine: serine 700 and serine 712. A Phosphothreonine modification is found at threonine 717. 6 positions are modified to phosphoserine: serine 737, serine 753, serine 768, serine 790, serine 795, and serine 813. A helical membrane pass occupies residues 859–879 (LIFVLIWCLVIFLAEVAASLV). Residues 859 to 1155 (LIFVLIWCLV…AVNSSIDVDS (297 aa)) form the ABC transmembrane type-1 2 domain. The Extracellular segment spans residues 880-918 (VLWFLGNTPPQDKGNSTYSRNNSYAVIITRTSSYYVFYI). 2 N-linked (GlcNAc...) asparagine glycosylation sites follow: asparagine 894 and asparagine 900. The discontinuously helical transmembrane segment at 919-939 (YVGVADTLLAMGFFRGLPLVH) threads the bilayer. Residues 940-990 (TLITVSKILHHKMLHSVLQAPMSTLNTLKAGGILNRFSKDIAILDDLLPLT) are Cytoplasmic-facing. A helical transmembrane segment spans residues 991-1011 (IFDFIQLLLIVIGAIAVVAVL). Topologically, residues 1012–1013 (QP) are extracellular. The helical transmembrane segment at 1014-1034 (YIFVATVPVIVAFIMLRAYFL) threads the bilayer. Topologically, residues 1035–1095 (QTSQQLKQLE…TANWFLYLST (61 aa)) are cytoplasmic. Residues 1096 to 1116 (LRWFQMRIEMIFVIFFIAVTF) traverse the membrane as a helical segment. Over 1117 to 1130 (ISILTTGEGEGTVG) the chain is Extracellular. A helical membrane pass occupies residues 1131-1151 (IILTLAMNIMSTLQWAVNSSI). The Cytoplasmic portion of the chain corresponds to 1152–1481 (DVDSLMRSVS…TEEEVQDTRL (330 aa)). The 234-residue stretch at 1211–1444 (MTVKDLTAKY…RSLFRQAISP (234 aa)) folds into the ABC transporter 2 domain. Residues tyrosine 1220 and 1245–1252 (GRTGSGKS) each bind ATP. Positions 1387–1481 (RTLKQAFADC…TEEEVQDTRL (95 aa)) are interaction with GORASP2. Cysteine 1396 is lipidated: S-palmitoyl cysteine. Phosphoserine is present on residues serine 1445 and serine 1457. A PDZ-binding motif is present at residues 1479–1481 (TRL).

It belongs to the ABC transporter superfamily. ABCC family. CFTR transporter (TC 3.A.1.202) subfamily. Monomer; does not require oligomerization for channel activity. May form oligomers in the membrane. Interacts with SLC26A3, SLC26A6 and NHERF1. Interacts with SHANK2. Interacts with MYO6. Interacts (via C-terminus) with GOPC (via PDZ domain); this promotes CFTR internalization and thereby decreases channel activity. Interacts with SLC4A7 through NHERF1. Found in a complex with MYO5B and RAB11A. Interacts with ANO1. Interacts with SLC26A8. Interacts with AHCYL1; the interaction increases CFTR activity. Interacts with CSE1L. The core-glycosylated form interacts with GORASP2 (via PDZ GRASP-type 1 domain) in respone to ER stress. Interacts with MARCHF2; the interaction leads to CFTR ubiqtuitination and degradation. Interacts with ADGRG2. Post-translationally, N-glycosylated. In terms of processing, phosphorylated; cAMP treatment promotes phosphorylation and activates the channel. Dephosphorylation decreases the ATPase activity (in vitro). Phosphorylation at PKA sites activates the channel. Phosphorylation at PKC sites enhances the response to phosphorylation by PKA. Phosphorylated by AMPK; this inhibits channel activity. Ubiquitinated, leading to its degradation in the lysosome. Deubiquitination by USP10 in early endosomes enhances its endocytic recycling to the cell membrane. Ubiquitinated by RNF185 during ER stress. Ubiquitinated by MARCHF2.

It is found in the apical cell membrane. Its subcellular location is the early endosome membrane. The protein localises to the cell membrane. It localises to the recycling endosome membrane. The protein resides in the endoplasmic reticulum membrane. It is found in the nucleus. It catalyses the reaction ATP + H2O + closed Cl(-) channel = ADP + phosphate + open Cl(-) channel.. The catalysed reaction is chloride(in) = chloride(out). It carries out the reaction hydrogencarbonate(in) = hydrogencarbonate(out). The enzyme catalyses ATP + H2O = ADP + phosphate + H(+). Epithelial ion channel that plays an important role in the regulation of epithelial ion and water transport and fluid homeostasis. Mediates the transport of chloride ions across the cell membrane. Possesses an intrinsic ATPase activity and utilizes ATP to gate its channel; the passive flow of anions through the channel is gated by cycles of ATP binding and hydrolysis by the ATP-binding domains. The ion channel is also permeable to HCO(3)(-); selectivity depends on the extracellular chloride concentration. Exerts its function also by modulating the activity of other ion channels and transporters. Contributes to the regulation of the pH and the ion content of the epithelial fluid layer. Modulates the activity of the epithelial sodium channel (ENaC) complex, in part by regulating the cell surface expression of the ENaC complex. May regulate bicarbonate secretion and salvage in epithelial cells by regulating the transporter SLC4A7. Can inhibit the chloride channel activity of ANO1. Plays a role in the chloride and bicarbonate homeostasis during sperm epididymal maturation and capacitation. In Macaca fascicularis (Crab-eating macaque), this protein is Cystic fibrosis transmembrane conductance regulator.